We begin with the raw amino-acid sequence, 500 residues long: Cytochrome P450 2C11 (500 aa).

A heme-binding site is contributed by Cys435.

It belongs to the cytochrome P450 family. Requires heme as cofactor. As to expression, liver and kidney; male-specific.

The protein localises to the endoplasmic reticulum membrane. It localises to the microsome membrane. It carries out the reaction an organic molecule + reduced [NADPH--hemoprotein reductase] + O2 = an alcohol + oxidized [NADPH--hemoprotein reductase] + H2O + H(+). It catalyses the reaction testosterone + reduced [NADPH--hemoprotein reductase] + O2 = 2alpha,17beta-dihydroxyandrost-4-en-3-one + oxidized [NADPH--hemoprotein reductase] + H2O + H(+). The enzyme catalyses testosterone + reduced [NADPH--hemoprotein reductase] + O2 = 16alpha,17beta-dihydroxyandrost-4-en-3-one + oxidized [NADPH--hemoprotein reductase] + H2O + H(+). The catalysed reaction is (5Z,8Z,11Z,14Z)-eicosatetraenoate + reduced [NADPH--hemoprotein reductase] + O2 = (8R,9S)-epoxy-(5Z,11Z,14Z)-eicosatrienoate + oxidized [NADPH--hemoprotein reductase] + H2O + H(+). It carries out the reaction (5Z,8Z,11Z,14Z)-eicosatetraenoate + reduced [NADPH--hemoprotein reductase] + O2 = (8S,9R)-epoxy-(5Z,11Z,14Z)-eicosatrienoate + oxidized [NADPH--hemoprotein reductase] + H2O + H(+). It catalyses the reaction (5Z,8Z,11Z,14Z)-eicosatetraenoate + reduced [NADPH--hemoprotein reductase] + O2 = (11R,12S)-epoxy-(5Z,8Z,14Z)-eicosatrienoate + oxidized [NADPH--hemoprotein reductase] + H2O + H(+). The enzyme catalyses (5Z,8Z,11Z,14Z)-eicosatetraenoate + reduced [NADPH--hemoprotein reductase] + O2 = (11S,12R)-epoxy-(5Z,8Z,14Z)-eicosatrienoate + oxidized [NADPH--hemoprotein reductase] + H2O + H(+). The catalysed reaction is (5Z,8Z,11Z,14Z)-eicosatetraenoate + reduced [NADPH--hemoprotein reductase] + O2 = (14R,15S)-epoxy-(5Z,8Z,11Z)-eicosatrienoate + oxidized [NADPH--hemoprotein reductase] + H2O + H(+). It carries out the reaction (5Z,8Z,11Z,14Z)-eicosatetraenoate + reduced [NADPH--hemoprotein reductase] + O2 = (14S,15R)-epoxy-(5Z,8Z,11Z)-eicosatrienoate + oxidized [NADPH--hemoprotein reductase] + H2O + H(+). It catalyses the reaction (5Z,8Z,11Z,14Z,17Z)-eicosapentaenoate + reduced [NADPH--hemoprotein reductase] + O2 = 8,9-epoxy-(5Z,11Z,14Z,17Z)-eicosatetraenoate + oxidized [NADPH--hemoprotein reductase] + H2O + H(+). The enzyme catalyses (5Z,8Z,11Z,14Z,17Z)-eicosapentaenoate + reduced [NADPH--hemoprotein reductase] + O2 = 11,12-epoxy-(5Z,8Z,14Z,17Z)-eicosatetraenoate + oxidized [NADPH--hemoprotein reductase] + H2O + H(+). The catalysed reaction is (5Z,8Z,11Z,14Z,17Z)-eicosapentaenoate + reduced [NADPH--hemoprotein reductase] + O2 = 14,15-epoxy-(5Z,8Z,11Z,17Z)-eicosatetraenoate + oxidized [NADPH--hemoprotein reductase] + H2O + H(+). It carries out the reaction (5Z,8Z,11Z,14Z,17Z)-eicosapentaenoate + reduced [NADPH--hemoprotein reductase] + O2 = (17S,18R)-epoxy-(5Z,8Z,11Z,14Z)-eicosatetraenoate + oxidized [NADPH--hemoprotein reductase] + H2O + H(+). It catalyses the reaction (5Z,8Z,11Z,14Z,17Z)-eicosapentaenoate + reduced [NADPH--hemoprotein reductase] + O2 = (17R,18S)-epoxy-(5Z,8Z,11Z,14Z)-eicosatetraenoate + oxidized [NADPH--hemoprotein reductase] + H2O + H(+). It participates in lipid metabolism; arachidonate metabolism. Its pathway is steroid metabolism. Functionally, a cytochrome P450 monooxygenase involved in the metabolism of steroid hormones and fatty acids. Catalyzes the hydroxylation of carbon-hydrogen bonds. Metabolizes testosterone to 2alpha- and 16alpha-hydroxytestosterone. Catalyzes the epoxidation of double bonds of polyunsaturated fatty acids (PUFAs). Converts arachidonic acid (ARA, C20:4(n-6)) primarily to epoxyeicosatrienoic acid (EET) regioisomers, 8,9-, 11,12-, and 14,15-EET, with both R,S and S,R stereochemistry. Preferentially produces 11R,12S-EET enantiomer. To a lesser extent, catalyzes the hydroxylation of arachidonic acid producing hydroxyeicosatetraenoates (HETEs). Metabolizes eicosapentaenoic acid (EPA, C20:5(n-3)) to epoxyeicosatetraenoic acid (EETeTr) regioisomers, 8,9-, 11,12-, 14,15-, and 17,18-EETeTr, preferentially producing 17R,18S-EETeTr enantiomer. Mechanistically, uses molecular oxygen inserting one oxygen atom into a substrate, and reducing the second into a water molecule, with two electrons provided by NADPH via cytochrome P450 reductase (NADPH--hemoprotein reductase). The protein is Cytochrome P450 2C11 (Cyp2c11) of Rattus norvegicus (Rat).